Consider the following 196-residue polypeptide: Protein LURP-one-related 8 (196 aa).

This sequence belongs to the LOR family.

Might be related to the phospholipid scramblase and tubby-like superfamily of membrane tethered transcription factors. The polypeptide is Protein LURP-one-related 8 (Arabidopsis thaliana (Mouse-ear cress)).